The chain runs to 560 residues: Dihydroxy-acid dehydratase (560 aa).

D80 contributes to the Mg(2+) binding site. A [2Fe-2S] cluster-binding site is contributed by C121. Mg(2+) is bound by residues D122 and K123. N6-carboxylysine is present on K123. A [2Fe-2S] cluster-binding site is contributed by C194. E447 lines the Mg(2+) pocket. The Proton acceptor role is filled by S473.

This sequence belongs to the IlvD/Edd family. As to quaternary structure, homodimer. [2Fe-2S] cluster is required as a cofactor. Mg(2+) serves as cofactor.

The enzyme catalyses (2R)-2,3-dihydroxy-3-methylbutanoate = 3-methyl-2-oxobutanoate + H2O. It catalyses the reaction (2R,3R)-2,3-dihydroxy-3-methylpentanoate = (S)-3-methyl-2-oxopentanoate + H2O. It functions in the pathway amino-acid biosynthesis; L-isoleucine biosynthesis; L-isoleucine from 2-oxobutanoate: step 3/4. Its pathway is amino-acid biosynthesis; L-valine biosynthesis; L-valine from pyruvate: step 3/4. In terms of biological role, functions in the biosynthesis of branched-chain amino acids. Catalyzes the dehydration of (2R,3R)-2,3-dihydroxy-3-methylpentanoate (2,3-dihydroxy-3-methylvalerate) into 2-oxo-3-methylpentanoate (2-oxo-3-methylvalerate) and of (2R)-2,3-dihydroxy-3-methylbutanoate (2,3-dihydroxyisovalerate) into 2-oxo-3-methylbutanoate (2-oxoisovalerate), the penultimate precursor to L-isoleucine and L-valine, respectively. The sequence is that of Dihydroxy-acid dehydratase from Chlorobaculum tepidum (strain ATCC 49652 / DSM 12025 / NBRC 103806 / TLS) (Chlorobium tepidum).